Reading from the N-terminus, the 92-residue chain is Small ribosomal subunit protein uS19 (92 aa).

Belongs to the universal ribosomal protein uS19 family.

Its function is as follows. Protein S19 forms a complex with S13 that binds strongly to the 16S ribosomal RNA. The sequence is that of Small ribosomal subunit protein uS19 from Buchnera aphidicola subsp. Acyrthosiphon pisum (strain 5A).